The primary structure comprises 89 residues: Protein S100-A8 (89 aa).

2 consecutive EF-hand domains span residues isoleucine 13–asparagine 48 and valine 46–alanine 81. Zn(2+)-binding residues include histidine 17 and histidine 27. Ca(2+) is bound at residue aspartate 33. Cysteine 42 carries the S-nitrosocysteine modification. Ca(2+)-binding residues include aspartate 59, asparagine 61, aspartate 63, and glutamate 70. Zn(2+) is bound at residue histidine 83.

Belongs to the S-100 family. As to quaternary structure, homodimer. Preferentially exists as a heterodimer or heterotetramer with S100A9 known as calprotectin (S100A8/A9). Calprotectin (S100A8/9) interacts with CEACAM3 and tubulin filaments in a calcium-dependent manner. Heterotetrameric calprotectin (S100A8/A9) interacts with ANXA6 and associates with tubulin filaments in activated monocytes. S100A8 and calprotectin (S100A8/9) interact with NCF2/P67PHOX, RAC1 and RAC2. Calprotectin (S100A8/9) interacts with CYBA and CYBB. S100A8 interacts with AGER, ATP2A2 and with the heterodimeric complex formed by TLR4 and LY96. Calprotectin (S100A8/9) interacts with NOS2 to form the iNOS-S100A8/A9 transnitrosylase complex. Calprotectin (S100A8/9) interacts with CD69.

It is found in the secreted. Its subcellular location is the cytoplasm. The protein localises to the cytoskeleton. The protein resides in the cell membrane. Its activity is regulated as follows. Calprotectin (S100A8/A9) activity on TLR4 signaling is inhibited by paquinimod. In terms of biological role, S100A8 is a calcium- and zinc-binding protein which plays a prominent role in the regulation of inflammatory processes and immune response. It can induce neutrophil chemotaxis and adhesion. Predominantly found as calprotectin (S100A8/A9) which has a wide plethora of intra- and extracellular functions. The intracellular functions include: facilitating leukocyte arachidonic acid trafficking and metabolism, modulation of the tubulin-dependent cytoskeleton during migration of phagocytes and activation of the neutrophilic NADPH-oxidase. Also participates in regulatory T-cell differentiation together with CD69. Activates NADPH-oxidase by facilitating the enzyme complex assembly at the cell membrane, transferring arachidonic acid, an essential cofactor, to the enzyme complex and S100A8 contributes to the enzyme assembly by directly binding to NCF2/P67PHOX. The extracellular functions involve pro-inflammatory, antimicrobial, oxidant-scavenging and apoptosis-inducing activities. Its pro-inflammatory activity includes recruitment of leukocytes, promotion of cytokine and chemokine production, and regulation of leukocyte adhesion and migration. Acts as an alarmin or a danger associated molecular pattern (DAMP) molecule and stimulates innate immune cells via binding to pattern recognition receptors such as Toll-like receptor 4 (TLR4) and receptor for advanced glycation endproducts (AGER). Binding to TLR4 and AGER activates the MAP-kinase and NF-kappa-B signaling pathways resulting in the amplification of the pro-inflammatory cascade. Has antimicrobial activity towards bacteria and fungi and exerts its antimicrobial activity probably via chelation of Zn(2+) which is essential for microbial growth. Can induce cell death via autophagy and apoptosis and this occurs through the cross-talk of mitochondria and lysosomes via reactive oxygen species (ROS) and the process involves BNIP3. Can regulate neutrophil number and apoptosis by an anti-apoptotic effect; regulates cell survival via ITGAM/ITGB and TLR4 and a signaling mechanism involving MEK-ERK. Its role as an oxidant scavenger has a protective role in preventing exaggerated tissue damage by scavenging oxidants. The iNOS-S100A8/A9 transnitrosylase complex is proposed to direct selective inflammatory stimulus-dependent S-nitrosylation of multiple targets such as GAPDH, ANXA5, EZR, MSN and VIM by recognizing a [IL]-x-C-x-x-[DE] motif; S100A8 seems to contribute to S-nitrosylation site selectivity. Its function is as follows. (Microbial infection) Upon infection by murine coronavirus (MHV-A59), induces expansion of aberrant immature neutrophils in a TLR4-dependent manner. The chain is Protein S100-A8 from Mus musculus (Mouse).